The chain runs to 141 residues: ATP synthase epsilon chain (141 aa).

The protein belongs to the ATPase epsilon chain family. As to quaternary structure, F-type ATPases have 2 components, CF(1) - the catalytic core - and CF(0) - the membrane proton channel. CF(1) has five subunits: alpha(3), beta(3), gamma(1), delta(1), epsilon(1). CF(0) has three main subunits: a, b and c.

Its subcellular location is the cell inner membrane. Functionally, produces ATP from ADP in the presence of a proton gradient across the membrane. The sequence is that of ATP synthase epsilon chain from Burkholderia ambifaria (strain ATCC BAA-244 / DSM 16087 / CCUG 44356 / LMG 19182 / AMMD) (Burkholderia cepacia (strain AMMD)).